The following is a 410-amino-acid chain: MSKLVPPHGKEKKLKPLLLEGAALAAEKEKAKTLKVVPMTSREASDLIMLGIGAFTPLDGFMGYADWKGVCDKYTMADGVFWPIPITLSADKAVADSIGKNEEVALLDVENNEILGTMKVTEKYTIDKEHECKSVFWTNDAAGHPGVAKVMAQKEVNLAGPVKVISESFYPTQFKNVYQRPAEARKLFDEKGWRRVAALQLRNPMHRSHEFLAKIAVEVMDGLYIHQLVGKLKEGDIPADVRVKAIDVLVENYFVKDTVIQGGYPAEMRYAGPREALLHAVFRQNYGCSHLIVGRDHAGVGDYYGPFDAQKIFDDIPEGALLLQPLKIDWTFHCFKCGGMASMRTCPHGKADRLLLSGTMVRKTLSEGGELPKEFSRPEVVKVLQEYYAGLEEKVEIKLHGAATGDVKKK.

The protein belongs to the sulfate adenylyltransferase family.

It catalyses the reaction sulfate + ATP + H(+) = adenosine 5'-phosphosulfate + diphosphate. It participates in sulfur metabolism; hydrogen sulfide biosynthesis; sulfite from sulfate: step 1/3. The sequence is that of Sulfate adenylyltransferase from Syntrophobacter fumaroxidans (strain DSM 10017 / MPOB).